The following is a 385-amino-acid chain: MSSTGFTSPFGNANPFGSSGRSESGPMHRLVEEDENDTITSPTTPHFGVKNNAAPAFWNGFGGDAPSDMPVRRQPDDFPAHYNLGRRTSVSAESLKPVTDNSDNWSPPVHPKTAEQLERLKKAISGNFLFNHLEDDQSAQVLGALVEKPVPAKGIKVITQGDAGDYFYVVEKGRFEVYVNSTGALQPGPDGMGQKVGEIAEGGSFGELALMYNAPRAATVVSAEPQCTLWALDRVTFRRILMESTFSRRRMYESFLEEVPILKTLTPYERSKIADALESQKYPAGHEIILEGDPGHSFFLLEAGEAAAFKRGNDSPVKNYKKGDFFGELALLNDAPRAASVISQTEVKVARLGKNAFQRLLGPIESILRRTRYVEAEEVDPLQVS.

A compositionally biased stretch (polar residues) spans M1–S22. 2 disordered regions span residues M1–N51 and D77–P111. A dimerization and phosphorylation region spans residues M1–F128. S89 bears the Phosphoserine mark. Residues L129–P260, E207, R216, I261–E378, E328, and R337 contribute to the 3',5'-cyclic AMP site.

It belongs to the cAMP-dependent kinase regulatory chain family. In terms of assembly, tetramer, composed of 2 regulatory (R) and 2 catalytic (C) subunits. In the presence of cAMP it dissociates into 2 active monomeric C subunits and an R dimer.

The polypeptide is cAMP-dependent protein kinase regulatory subunit (mcb) (Neurospora crassa (strain ATCC 24698 / 74-OR23-1A / CBS 708.71 / DSM 1257 / FGSC 987)).